A 1053-amino-acid chain; its full sequence is Mgp-operon protein 3 (1053 aa).

An N-terminal signal peptide occupies residues 1 to 25 (MKTMRKQIYKKAYWLLLPFLPLALA). Disordered regions lie at residues 162–207 (SLAK…GFKL) and 224–261 (EPIDGTKQGKGKDSSGWSSTEENEAKNDAPSVSGGGSS). Residues 164 to 175 (AKEKGKTQREVH) are compositionally biased toward basic and acidic residues. Residues 179 to 207 (GQANQWTSQRNQHDLNNNPSPNASTGFKL) show a composition bias toward polar residues. The helical transmembrane segment at 946–966 (VGSSVGILFILLVLGLGIGIP) threads the bilayer. A disordered region spans residues 1024-1053 (AAFLKPPVQPPSKPEGEQKAVEVKSEETKS). Over residues 1037–1053 (PEGEQKAVEVKSEETKS) the composition is skewed to basic and acidic residues.

Its subcellular location is the cell membrane. The polypeptide is Mgp-operon protein 3 (Mycoplasma genitalium (strain ATCC 33530 / DSM 19775 / NCTC 10195 / G37) (Mycoplasmoides genitalium)).